A 565-amino-acid chain; its full sequence is Proline--tRNA ligase (565 aa).

It belongs to the class-II aminoacyl-tRNA synthetase family. ProS type 1 subfamily. In terms of assembly, homodimer.

The protein resides in the cytoplasm. It catalyses the reaction tRNA(Pro) + L-proline + ATP = L-prolyl-tRNA(Pro) + AMP + diphosphate. Its function is as follows. Catalyzes the attachment of proline to tRNA(Pro) in a two-step reaction: proline is first activated by ATP to form Pro-AMP and then transferred to the acceptor end of tRNA(Pro). As ProRS can inadvertently accommodate and process non-cognate amino acids such as alanine and cysteine, to avoid such errors it has two additional distinct editing activities against alanine. One activity is designated as 'pretransfer' editing and involves the tRNA(Pro)-independent hydrolysis of activated Ala-AMP. The other activity is designated 'posttransfer' editing and involves deacylation of mischarged Ala-tRNA(Pro). The misacylated Cys-tRNA(Pro) is not edited by ProRS. This Lactobacillus delbrueckii subsp. bulgaricus (strain ATCC 11842 / DSM 20081 / BCRC 10696 / JCM 1002 / NBRC 13953 / NCIMB 11778 / NCTC 12712 / WDCM 00102 / Lb 14) protein is Proline--tRNA ligase.